We begin with the raw amino-acid sequence, 564 residues long: Pyruvate decarboxylase (564 aa).

2 residues coordinate pyruvate: D28 and H115. Thiamine diphosphate contacts are provided by residues T390 and 413-415 (GSI). D444 contacts Mg(2+). Residues 445–446 (GS) and 471–476 (NDGYTI) contribute to the thiamine diphosphate site. 2 residues coordinate Mg(2+): N471 and G473. E477 lines the pyruvate pocket.

It belongs to the TPP enzyme family. Homotetramer. It depends on Mg(2+) as a cofactor. Requires thiamine diphosphate as cofactor.

It catalyses the reaction a 2-oxocarboxylate + H(+) = an aldehyde + CO2. The enzyme catalyses pyruvate + H(+) = acetaldehyde + CO2. The protein is Pyruvate decarboxylase (PDC1) of Candida glabrata (strain ATCC 2001 / BCRC 20586 / JCM 3761 / NBRC 0622 / NRRL Y-65 / CBS 138) (Yeast).